We begin with the raw amino-acid sequence, 22 residues long: Rothein 4.1 (22 aa).

The protein belongs to the frog skin active peptide (FSAP) family. Rothein subfamily. As to expression, expressed by the skin dorsal glands.

The protein localises to the secreted. Functionally, lacks antimicrobial activity. Does not inhibit the formation of NO by neuronal nitric oxide. The sequence is that of Rothein 4.1 from Litoria rothii (Roth's tree frog).